Here is a 1016-residue protein sequence, read N- to C-terminus: S-layer protein A (1016 aa).

The N-terminal stretch at 1-30 (MDLSTKKVISAGLVFIYALSLAMLVPMFLA) is a signal peptide.

Belongs to the Sulfolobales SlaA family. As to quaternary structure, the mushroom-shaped unit cells of the Sulfolobales' S-layers may consist of three SlaB subunits and six SlaA subunits.

The protein resides in the secreted. It is found in the cell wall. The protein localises to the S-layer. Functionally, S-layer large protein. May form the highly ordered outer sheath. The chain is S-layer protein A from Acidianus ambivalens (Desulfurolobus ambivalens).